A 148-amino-acid chain; its full sequence is MSKVLILFGSSTGNTESIAQKLEELVAAGGHEVTLLNAAEASADNLADGYDAVLMGCSAWGMEDLELQDDFAPLFDEMENMGLKGKKLAAFASGDMEYEHYCGAVPAIEEKARGLGAEVICEGLKIEGDASSDPDAVSAFAEDVLKKL.

The 142-residue stretch at 4–145 (VLILFGSSTG…AVSAFAEDVL (142 aa)) folds into the Flavodoxin-like domain.

This sequence belongs to the flavodoxin family. It depends on FMN as a cofactor.

In terms of biological role, low-potential electron donor to a number of redox enzymes. This chain is Flavodoxin, found in Desulfovibrio desulfuricans (strain ATCC 27774 / DSM 6949 / MB).